A 574-amino-acid polypeptide reads, in one-letter code: Dihydroxy-acid dehydratase 2 (574 aa).

The tract at residues 1–20 is disordered; it reads MNAKTNIKQRLPSRHVTEGP. Cys56 is a [2Fe-2S] cluster binding site. Asp88 serves as a coordination point for Mg(2+). Cys129 is a [2Fe-2S] cluster binding site. Positions 130 and 131 each coordinate Mg(2+). The residue at position 131 (Lys131) is an N6-carboxylysine. Residue Cys201 coordinates [2Fe-2S] cluster. Glu451 contributes to the Mg(2+) binding site. The active-site Proton acceptor is the Ser477.

This sequence belongs to the IlvD/Edd family. In terms of assembly, homodimer. [2Fe-2S] cluster serves as cofactor. The cofactor is Mg(2+).

The catalysed reaction is (2R)-2,3-dihydroxy-3-methylbutanoate = 3-methyl-2-oxobutanoate + H2O. It carries out the reaction (2R,3R)-2,3-dihydroxy-3-methylpentanoate = (S)-3-methyl-2-oxopentanoate + H2O. Its pathway is amino-acid biosynthesis; L-isoleucine biosynthesis; L-isoleucine from 2-oxobutanoate: step 3/4. It functions in the pathway amino-acid biosynthesis; L-valine biosynthesis; L-valine from pyruvate: step 3/4. Its function is as follows. Functions in the biosynthesis of branched-chain amino acids. Catalyzes the dehydration of (2R,3R)-2,3-dihydroxy-3-methylpentanoate (2,3-dihydroxy-3-methylvalerate) into 2-oxo-3-methylpentanoate (2-oxo-3-methylvalerate) and of (2R)-2,3-dihydroxy-3-methylbutanoate (2,3-dihydroxyisovalerate) into 2-oxo-3-methylbutanoate (2-oxoisovalerate), the penultimate precursor to L-isoleucine and L-valine, respectively. This is Dihydroxy-acid dehydratase 2 from Bradyrhizobium diazoefficiens (strain JCM 10833 / BCRC 13528 / IAM 13628 / NBRC 14792 / USDA 110).